A 923-amino-acid polypeptide reads, in one-letter code: Progesterone receptor (923 aa).

Residues 1-11 (MTELQAKDPRT) are compositionally biased toward basic and acidic residues. The segment at 1-49 (MTELQAKDPRTLHTSGAAPSPTHVGSPLLARLDPDPFQGSQHSDASSVV) is disordered. An AF3; mediates transcriptional activation (in isoform B) region spans residues 1–164 (MTELQAKDPR…PATKGLLSPL (164 aa)). Positions 1-556 (MTELQAKDPR…YGFDSLPQKI (556 aa)) are modulating, Pro-Rich. Residue Lys-7 forms a Glycyl lysine isopeptide (Lys-Gly) (interchain with G-Cter in SUMO) linkage. Position 20 is a phosphoserine (Ser-20). Over residues 38–49 (QGSQHSDASSVV) the composition is skewed to polar residues. Positions 56 to 60 (LDRLL) match the LXXL motif 1 motif. Residues 67-111 (AQELPDEKTQNQQSLSDVEGAFSGVEASRRRSRNPRAPEKDSRLL) are disordered. Residue Ser-82 is modified to Phosphoserine. The LXXL motif 2 signature appears at 115–119 (LDTLL). Phosphoserine occurs at positions 130 and 162. The interval 152-239 (RSVPATKGLL…EGSAGPLLKS (88 aa)) is disordered. The mediates transcriptional transrepression (in isoform A) stretch occupies residues 165 to 304 (MSRPESKAGD…LATTVVDFIH (140 aa)). The Nuclear localization signal motif lies at 184-188 (VLPKA). A phosphoserine mark is found at Ser-190 and Ser-213. Ser-293 carries the phosphoserine; by MAPK1 modification. Residues 333-371 (AAQVPFAPPRGSPSAPSPPVPCGDFPDCTYPPEGDPKED) form a disordered region. A compositionally biased stretch (pro residues) spans 338 to 353 (FAPPRGSPSAPSPPVP). Residue Ser-344 is modified to Phosphoserine; by MAPK. Lys-387 participates in a covalent cross-link: Glycyl lysine isopeptide (Lys-Gly) (interchain with G-Cter in SUMO); alternate. A Glycyl lysine isopeptide (Lys-Gly) (interchain with G-Cter in ubiquitin); alternate cross-link involves residue Lys-387. Ser-399 bears the Phosphoserine; by CDK2 mark. The segment at 412-435 (TFPDFPLPPRPPRAPPSRPGEAAV) is disordered. The span at 416 to 429 (FPLPPRPPRAPPSR) shows a compositional bias: pro residues. The tract at residues 450 to 536 (SALECILYKA…VYPPYLNYLR (87 aa)) is AF1; mediates transcriptional activation. Lys-521 participates in a covalent cross-link: Glycyl lysine isopeptide (Lys-Gly) (interchain with G-Cter in SUMO). 2 NR C4-type zinc fingers span residues 557-577 (CLIC…CGSC) and 593-617 (CAGR…LRKC). The nuclear receptor DNA-binding region spans 557 to 629 (CLICGDEASG…AGMVLGGRKF (73 aa)). Ser-666 is modified (phosphoserine). In terms of domain architecture, NR LBD spans 669-903 (QEIQLVPPLI…EFPEMMSEVI (235 aa)). Positions 677-923 (LINLLMSIEP…MVKPLLFHKK (247 aa)) are AF2; mediates transcriptional activation. Arg-756 provides a ligand contact to progesterone.

Belongs to the nuclear hormone receptor family. NR3 subfamily. In terms of assembly, interacts with SMARD1 and UNC45A. Interacts with CUEDC2; the interaction promotes ubiquitination, decreases sumoylation, and represses transcriptional activity. Interacts with PIAS3; the interaction promotes sumoylation of PR in a hormone-dependent manner, inhibits DNA-binding, and alters nuclear export. Interacts with SP1; the interaction requires ligand-induced phosphorylation on Ser-344. Interacts with PRMT2. Isoform A interacts with NCOR2. Isoform B (but not isoform A) interacts with NCOA2 and NCOA1. Isoform B (but not isoform A) interacts with KLF9. Interacts with GTF2B. In terms of processing, phosphorylated on multiple serine sites. Several of these sites are hormone-dependent. Phosphorylation on Ser-293 is highly hormone-dependent and modulates ubiquitination and sumoylation on Lys-387. Phosphorylation on Ser-344 also requires induction by hormone. Basal phosphorylation on Ser-82, Ser-190 and Ser-399 is increased in response to progesterone and can be phosphorylated in vitro by the CDK2-A1 complex. Increased levels of phosphorylation on Ser-399 also in the presence of EGF, heregulin, IGF, PMA and FBS. Phosphorylation at this site by CDK2 is ligand-independent, and increases nuclear translocation and transcriptional activity. Phosphorylation at Ser-293, but not at Ser-190, is impaired during the G(2)/M phase of the cell cycle. Phosphorylation on Ser-344 by ERK1/2 MAPK is required for interaction with SP1. Sumoylation is hormone-dependent and represses transcriptional activity. Sumoylation on all three sites is enhanced by PIAS3. Desumoylated by SENP1. Sumoylation on Lys-387, the main site of sumoylation, is repressed by ubiquitination on the same site, and modulated by phosphorylation at Ser-293. Post-translationally, ubiquitination is hormone-dependent and represses sumoylation on the same site. Promoted by MAPK-mediated phosphorylation on Ser-293. Ubiquitinated by UBR5, leading to its degradation: UBR5 specifically recognizes and binds ligand-bound PGR when it is not associated with coactivators (NCOAs). In presence of NCOAs, the UBR5-degron is not accessible, preventing its ubiquitination and degradation. In terms of processing, palmitoylated by ZDHHC7 and ZDHHC21. Palmitoylation is required for plasma membrane targeting and for rapid intracellular signaling via ERK and AKT kinases and cAMP generation. Isoform A and isoform B are expressed in the pituitary.

It localises to the nucleus. Its subcellular location is the cytoplasm. The steroid hormones and their receptors are involved in the regulation of eukaryotic gene expression and affect cellular proliferation and differentiation in target tissues. Depending on the isoform, progesterone receptor functions as a transcriptional activator or repressor. Its function is as follows. Ligand-dependent transdominant repressor of steroid hormone receptor transcriptional activity including repression of its isoform B, MR and ER. Transrepressional activity may involve recruitment of corepressor NCOR2. In terms of biological role, transcriptional activator of several progesteron-dependent promoters in a variety of cell types. Involved in activation of SRC-dependent MAPK signaling on hormone stimulation. This is Progesterone receptor (Pgr) from Rattus norvegicus (Rat).